We begin with the raw amino-acid sequence, 484 residues long: Glutamyl-tRNA(Gln) amidotransferase subunit B, mitochondrial (484 aa).

This sequence belongs to the GatB/GatE family. GatB subfamily. Subunit of the heterotrimeric GatFAB amidotransferase (AdT) complex, composed of A, B and F subunits.

The protein localises to the mitochondrion. It carries out the reaction L-glutamyl-tRNA(Gln) + L-glutamine + ATP + H2O = L-glutaminyl-tRNA(Gln) + L-glutamate + ADP + phosphate + H(+). Functionally, allows the formation of correctly charged Gln-tRNA(Gln) through the transamidation of misacylated Glu-tRNA(Gln) in the mitochondria. The reaction takes place in the presence of glutamine and ATP through an activated gamma-phospho-Glu-tRNA(Gln). The sequence is that of Glutamyl-tRNA(Gln) amidotransferase subunit B, mitochondrial from Candida tropicalis (strain ATCC MYA-3404 / T1) (Yeast).